The primary structure comprises 943 residues: Translation initiation factor IF-2 (943 aa).

Residues 30–357 (SVKSHSSSVE…KPVTERKFHE (328 aa)) are disordered. Basic and acidic residues-rich tracts occupy residues 69–82 (PKEE…DKAS), 112–137 (FKAE…DNRN), 145–155 (QGKRHNNDRRN), 163–196 (DHNK…RDNA), and 224–253 (RQSE…EKQQ). Residues 254–266 (VKVAVQKAAAETK) are compositionally biased toward low complexity. Basic and acidic residues predominate over residues 296–309 (KSRDNRRVNEDGPK). Residues 313–332 (NNKWNNQNQVRNQRNSNWNK) are compositionally biased toward low complexity. A tr-type G domain is found at 445-614 (ERAPVVTIMG…LLVAEVEELK (170 aa)). Positions 454 to 461 (GHVDHGKT) are G1. Position 454–461 (454–461 (GHVDHGKT)) interacts with GTP. Positions 479–483 (GITQH) are G2. The interval 500–503 (DTPG) is G3. Residues 500–504 (DTPGH) and 554–557 (NKID) each bind GTP. Residues 554–557 (NKID) are G4. The G5 stretch occupies residues 590–592 (SAK).

This sequence belongs to the TRAFAC class translation factor GTPase superfamily. Classic translation factor GTPase family. IF-2 subfamily.

The protein localises to the cytoplasm. One of the essential components for the initiation of protein synthesis. Protects formylmethionyl-tRNA from spontaneous hydrolysis and promotes its binding to the 30S ribosomal subunits. Also involved in the hydrolysis of GTP during the formation of the 70S ribosomal complex. This is Translation initiation factor IF-2 from Streptococcus thermophilus (strain ATCC BAA-250 / LMG 18311).